Here is a 177-residue protein sequence, read N- to C-terminus: Large ribosomal subunit protein uL6 (177 aa).

It belongs to the universal ribosomal protein uL6 family. In terms of assembly, part of the 50S ribosomal subunit.

Functionally, this protein binds to the 23S rRNA, and is important in its secondary structure. It is located near the subunit interface in the base of the L7/L12 stalk, and near the tRNA binding site of the peptidyltransferase center. The polypeptide is Large ribosomal subunit protein uL6 (Pectobacterium atrosepticum (strain SCRI 1043 / ATCC BAA-672) (Erwinia carotovora subsp. atroseptica)).